The primary structure comprises 202 residues: Neurensin-2 (202 aa).

A run of 2 helical transmembrane segments spans residues 65-85 (VAVA…GYAV) and 116-136 (VVGA…LFLI). The tract at residues 162–202 (RDEPEKLSPAFHETSSQSPFLTPPSPFGQQSVQTSQPQRDL) is disordered. Polar residues predominate over residues 188–202 (FGQQSVQTSQPQRDL).

The protein belongs to the VMP family. Expressed specifically in brain where it is widely expressed, with highest levels of expression in thalamus and hypothalamus. In brain, found in neural cell bodies and detected in many regions of the limbic system, such as the septum nucleus, horizontal and vertical limbs of the diagonal band, hippocampus, amygdaloid nucleus, and habernula nucleus. Also localizes to small vesicles found in the perinuclear region of Neuro2a and PC12 cells.

The protein resides in the membrane. In terms of biological role, may play a role in maintenance and/or transport of vesicles. This is Neurensin-2 from Mus musculus (Mouse).